Here is a 419-residue protein sequence, read N- to C-terminus: Transcription factor 7 (419 aa).

The span at 1 to 12 (MPQLDSGGGGAG) shows a compositional bias: gly residues. Positions 1–60 (MPQLDSGGGGAGRGDDLGAPDELLAFQDEGEEQDDKNRDSPVGPERDLAELKSSLVNESE) are CTNNB1-binding. 2 disordered regions span residues 1-111 (MPQL…LKAP) and 134-200 (PASG…SGFY). Composition is skewed to basic and acidic residues over residues 35–50 (DKNR…DLAE) and 86–109 (LGRE…DGLK). Residues 143–158 (QPQPPLHNKPGQPPHG) show a composition bias toward pro residues. The HMG box DNA-binding region spans 304–372 (IKKPLNAFML…LHMQLYPGWS (69 aa)). Residues 374–406 (RDNYGKKKRRSREKHQESTTGGKRNAFGTYPEK) form a disordered region. The short motif at 379–385 (KKKRRSR) is the Nuclear localization signal element.

This sequence belongs to the TCF/LEF family. Binds the armadillo repeat of CTNNB1 and forms a stable complex. Binds TLE5, TLE1, TLE2, TLE3 and TLE4. Interacts with MLLT11. Interacts with DAZAP2. In terms of assembly, interacts (via N-terminus) with SOX13; inhibits WNT-mediated transcriptional activity. In terms of tissue distribution, T-cell specific. Expressed in triple negative 2 subpopulations of T-cells and both the gamma-delta and alpha-beta T-cell lineages. Expressed in Il7 receptor positive innate-like T-cells in the mesenteric lymph nodes and spleen (at protein level).

Its subcellular location is the nucleus. Functionally, transcriptional activator involved in T-cell lymphocyte differentiation. Necessary for the survival of CD4(+) CD8(+) immature thymocytes. Isoforms lacking the N-terminal CTNNB1 binding domain cannot fulfill this role. Binds to the T-lymphocyte-specific enhancer element (5'-WWCAAAG-3') found in the promoter of the CD3E gene. Represses expression of the T-cell receptor gamma gene in alpha-beta T-cell lineages. Inhibits the developmental program of IL17A effector gamma-delta T-cell subsets via regulating the transcription of T-cell lineage effector proteins. Required for the development of natural killer receptor-positive lymphoid tissue inducer T-cells. TLE1, TLE2, TLE3 and TLE4 repress transactivation mediated by TCF7 and CTNNB1. May also act as feedback transcriptional repressor of CTNNB1 and TCF7L2 target genes. The chain is Transcription factor 7 from Mus musculus (Mouse).